The sequence spans 367 residues: Putative C-&gt;U-editing enzyme APOBEC-4 (367 aa).

One can recognise a CMP/dCMP-type deaminase domain in the interval 61–177 (PQTKHLTFYE…AWNREALRSL (117 aa)). Zn(2+) is bound at residue His93. The active-site Proton donor is Glu95. Zn(2+) is bound by residues Cys127 and Cys134.

It belongs to the cytidine and deoxycytidylate deaminase family. Zn(2+) is required as a cofactor. Predominantly expressed in testis.

Functionally, putative C to U editing enzyme whose physiological substrate is not yet known. The chain is Putative C-&gt;U-editing enzyme APOBEC-4 (APOBEC4) from Homo sapiens (Human).